The primary structure comprises 372 residues: N-methyl-L-tryptophan oxidase (372 aa).

Residue 4 to 34 participates in FAD binding; it reads DLIIIGSGSVGAAAGYYATRAGLNVLMTDAH. Cys308 is subject to S-8alpha-FAD cysteine.

The protein belongs to the MSOX/MTOX family. MTOX subfamily. Monomer. FAD serves as cofactor.

The catalysed reaction is N(alpha)-methyl-L-tryptophan + O2 + H2O = L-tryptophan + formaldehyde + H2O2. Catalyzes the oxidative demethylation of N-methyl-L-tryptophan. The protein is N-methyl-L-tryptophan oxidase of Escherichia coli O9:H4 (strain HS).